The chain runs to 416 residues: Orexin/Hypocretin receptor type 1 (416 aa).

A disordered region spans residues 1–22 (MEPSATPGAQPGVPTSSGEPFH). The Extracellular portion of the chain corresponds to 1–46 (MEPSATPGAQPGVPTSSGEPFHLPPDYEDEFLRYLWRDYLYPKQYE). Residues 26–41 (DYEDEFLRYLWRDYLY) form a required for response to orexin-A region. The helical transmembrane segment at 47 to 67 (WVLIAAYVAVFLIALVGNTLV) threads the bilayer. The Cytoplasmic segment spans residues 68–82 (CLAVWRNHHMRTVTN). A helical membrane pass occupies residues 83–105 (YFIVNLSLADVLVTAICLPASLL). The Extracellular segment spans residues 106 to 119 (VDITESWLFGHALC). A disulfide bridge links Cys-119 with Cys-202. A helical transmembrane segment spans residues 120–140 (KVIPYLQAVSVSVAVLTLSFI). The Cytoplasmic portion of the chain corresponds to 141–160 (ALDRWYAICHPLLFKSTARR). A helical transmembrane segment spans residues 161-182 (ARGSILGIWAVSLAVMVPQAAV). Topologically, residues 183-213 (MECSSVLPELANRTRLFSVCDERWADELYPK) are extracellular. N-linked (GlcNAc...) asparagine glycosylation occurs at Asn-194. The chain crosses the membrane as a helical span at residues 214 to 235 (IYHSCFFFVTYLAPLGLMGMAY). At 236–298 (FQIFRKLWGP…QMRARRKTAK (63 aa)) the chain is on the cytoplasmic side. A helical membrane pass occupies residues 299 to 321 (MLMVVLLVFALCYLPISVLNVLK). Topologically, residues 322 to 336 (RVFGMFRQASDREAV) are extracellular. Residues 337-360 (YACFTFSHWLVYANSAANPIIYNF) traverse the membrane as a helical segment. The Cytoplasmic portion of the chain corresponds to 361–416 (LSGKFREQFKAAFSCCLPGLGPSSSARHKSLSLQSRCSVSKVSEHVVLTTVTTVLS).

This sequence belongs to the G-protein coupled receptor 1 family. As to expression, highly expressed in the brain in the prefrontal cortex, hippocampus, paraventricular thalamus, ventromedial hypothalamus, arcuate nucleus, dorsal raphe nucleus, and locus coeruleus. Not detected in the spleen, lung, liver, skeletal muscle, kidney and testis. Orexin receptor mRNA expression has also been reported in the adrenal gland, enteric nervous system, and pancreas.

It localises to the cell membrane. Its function is as follows. Moderately selective excitatory receptor for orexin-A and, with a lower affinity, for orexin-B neuropeptide. Triggers an increase in cytoplasmic Ca(2+) levels in response to orexin-A binding. The protein is Orexin/Hypocretin receptor type 1 of Rattus norvegicus (Rat).